Consider the following 181-residue polypeptide: Ribosome-recycling factor (181 aa).

The protein belongs to the RRF family.

The protein resides in the cytoplasm. Its function is as follows. Responsible for the release of ribosomes from messenger RNA at the termination of protein biosynthesis. May increase the efficiency of translation by recycling ribosomes from one round of translation to another. In Tropheryma whipplei (strain TW08/27) (Whipple's bacillus), this protein is Ribosome-recycling factor.